Consider the following 154-residue polypeptide: MVRRRTASPSPSAPVRSAPRPAAQSSFAAPPPRPAAAAPAYHPPAAPTPMGAPMGAPSQGPGLMKQMAATAGGVAIGSAVGHAVGGMFTGGGSSHAEQAPAAAAAPAGAPQASGYSQPCEFEWRQFVDCAQNQSDVSLCNGFNDIFKQCKARYA.

Disordered regions lie at residues 1–64 and 86–109; these read MVRR…PGLM and GMFT…PAGA. 3 stretches are compositionally biased toward low complexity: residues 7 to 28, 48 to 57, and 96 to 109; these read ASPS…SSFA, TPMGAPMGAP, and AEQA…PAGA. In terms of domain architecture, CHCH spans 116–154; the sequence is SQPCEFEWRQFVDCAQNQSDVSLCNGFNDIFKQCKARYA. 2 consecutive short sequence motifs (cx9C motif) follow at residues 119-129 and 139-149; these read CEFEWRQFVDC and CNGFNDIFKQC. Cystine bridges form between Cys119–Cys149 and Cys129–Cys139.

This Caenorhabditis elegans protein is Hemiasterlin resistant protein 1 (har-1).